The following is a 186-amino-acid chain: MWLVECTGRDLTGLSCLLSMDRQPRRRQHVAGCRDVPPPLPQGSWGQTSPRHSILCSKSGCDLLGGGEYNGETSGEEFLAPAWTCRAQQAATWLSVQQTSHKALGPAGGAAMSSKLSPEEQFLSRIHFLRTFMCSVAGAELPGIPQATENGEGCRPARDPASSPSSLSMASVYTQCSSAQLVSALS.

Residues Ala147–Ser166 form a disordered region.

In terms of assembly, interacts with DNA damage response proteins ATR, H2AX, PCNA, RAD18 and RAD51C. Forms a complex with H2AX and RAD18 following DDUP phosphorylation. In terms of processing, phosphorylated in an ATR-dependent manner; phosphorylation is required for interaction with H2AX and RAD18 and for DDUP-mediated DNA damage repair.

The protein resides in the nucleus. Its subcellular location is the chromosome. Its function is as follows. Promotes DNA damage repair through both homologous recombination repair (HRR) and post-replication repair (PRR) mechanisms. Enhances the retention of DNA damage response protein RAD18 at sites of DNA damage. This allows for HRR via association of RAD18 with RAD51C and for PRR via RAD18-mediated promotion of PCNA monoubiquitination. This is DNA damage up-regulated protein from Homo sapiens (Human).